Reading from the N-terminus, the 402-residue chain is CCA-adding enzyme (402 aa).

Residues Gly-32 and Arg-35 each contribute to the ATP site. The CTP site is built by Gly-32 and Arg-35. Mg(2+)-binding residues include Asp-45 and Asp-47. The ATP site is built by Arg-116, Asp-159, Arg-162, Arg-165, and Arg-168. Residues Arg-116, Asp-159, Arg-162, Arg-165, and Arg-168 each coordinate CTP.

It belongs to the tRNA nucleotidyltransferase/poly(A) polymerase family. Bacterial CCA-adding enzyme type 3 subfamily. In terms of assembly, homodimer. The cofactor is Mg(2+).

It carries out the reaction a tRNA precursor + 2 CTP + ATP = a tRNA with a 3' CCA end + 3 diphosphate. The catalysed reaction is a tRNA with a 3' CCA end + 2 CTP + ATP = a tRNA with a 3' CCACCA end + 3 diphosphate. Functionally, catalyzes the addition and repair of the essential 3'-terminal CCA sequence in tRNAs without using a nucleic acid template. Adds these three nucleotides in the order of C, C, and A to the tRNA nucleotide-73, using CTP and ATP as substrates and producing inorganic pyrophosphate. tRNA 3'-terminal CCA addition is required both for tRNA processing and repair. Also involved in tRNA surveillance by mediating tandem CCA addition to generate a CCACCA at the 3' terminus of unstable tRNAs. While stable tRNAs receive only 3'-terminal CCA, unstable tRNAs are marked with CCACCA and rapidly degraded. This Streptococcus pyogenes serotype M1 protein is CCA-adding enzyme.